A 382-amino-acid chain; its full sequence is 1-deoxy-D-xylulose 5-phosphate reductoisomerase (382 aa).

NADPH contacts are provided by T10, G11, S12, I13, G36, and N122. K123 is a 1-deoxy-D-xylulose 5-phosphate binding site. Residue E124 coordinates NADPH. D148 contacts Mn(2+). S149, E150, S174, and H197 together coordinate 1-deoxy-D-xylulose 5-phosphate. E150 contacts Mn(2+). G203 lines the NADPH pocket. The 1-deoxy-D-xylulose 5-phosphate site is built by S210, N215, K216, and E219. Mn(2+) is bound at residue E219.

This sequence belongs to the DXR family. Requires Mg(2+) as cofactor. Mn(2+) is required as a cofactor.

The enzyme catalyses 2-C-methyl-D-erythritol 4-phosphate + NADP(+) = 1-deoxy-D-xylulose 5-phosphate + NADPH + H(+). Its pathway is isoprenoid biosynthesis; isopentenyl diphosphate biosynthesis via DXP pathway; isopentenyl diphosphate from 1-deoxy-D-xylulose 5-phosphate: step 1/6. In terms of biological role, catalyzes the NADPH-dependent rearrangement and reduction of 1-deoxy-D-xylulose-5-phosphate (DXP) to 2-C-methyl-D-erythritol 4-phosphate (MEP). In Chlorobaculum tepidum (strain ATCC 49652 / DSM 12025 / NBRC 103806 / TLS) (Chlorobium tepidum), this protein is 1-deoxy-D-xylulose 5-phosphate reductoisomerase.